The primary structure comprises 167 residues: MLPMITGFMNYGQQTLRAARYIGQGFMITLSHTNRLPVTIQYPYEKLITSERFRGRIHFEFDKCIACEVCVRVCPIDLPVVDWKLETNIRKKRLLNYSIDFGICIFCGNCVEYCPTNCLSMTEEYEFSTYDRHELNYNQIALGRLPMSVMDDYTIRTIWNSPQTKNG.

2 4Fe-4S ferredoxin-type domains span residues 55-84 (GRIH…VDWK) and 95-124 (LNYS…MTEE). Positions 64, 67, 70, 74, 104, 107, 110, and 114 each coordinate [4Fe-4S] cluster.

This sequence belongs to the complex I 23 kDa subunit family. As to quaternary structure, NDH is composed of at least 16 different subunits, 5 of which are encoded in the nucleus. Requires [4Fe-4S] cluster as cofactor.

The protein localises to the plastid. It is found in the chloroplast thylakoid membrane. It carries out the reaction a plastoquinone + NADH + (n+1) H(+)(in) = a plastoquinol + NAD(+) + n H(+)(out). The catalysed reaction is a plastoquinone + NADPH + (n+1) H(+)(in) = a plastoquinol + NADP(+) + n H(+)(out). In terms of biological role, NDH shuttles electrons from NAD(P)H:plastoquinone, via FMN and iron-sulfur (Fe-S) centers, to quinones in the photosynthetic chain and possibly in a chloroplast respiratory chain. The immediate electron acceptor for the enzyme in this species is believed to be plastoquinone. Couples the redox reaction to proton translocation, and thus conserves the redox energy in a proton gradient. The polypeptide is NAD(P)H-quinone oxidoreductase subunit I, chloroplastic (Draba nemorosa (Woodland whitlowgrass)).